The chain runs to 610 residues: Zinc metalloproteinase-disintegrin-like VAP1 (610 aa).

The N-terminal stretch at 1–20 (MIQVLLVTISLAVFPYQGSS) is a signal peptide. Positions 21–189 (VILESGNVND…KKASQSNLTP (169 aa)) are excised as a propeptide. Pyrrolidone carboxylic acid (Glu) is present on Glu190. A Peptidase M12B domain is found at 199–395 (KYVKLFLVAD…NMPQCILKKP (197 aa)). Asn218 is a glycosylation site (N-linked (GlcNAc...) asparagine). 3 cysteine pairs are disulfide-bonded: Cys310–Cys390, Cys350–Cys374, and Cys352–Cys357. Position 335 (His335) interacts with Zn(2+). The Metal-binding motif lies at 335–346 (HEMGHNLGMDHD). The active-site Proton acceptor is Glu336. Zn(2+) contacts are provided by His339 and His345. One can recognise a Disintegrin domain in the interval 403–488 (PAVCGNYFVE…AECTDRFQRN (86 aa)). The Ca(2+) site is built by Val405, Asn408, Phe410, Glu412, Glu415, and Asp418. Intrachain disulfides connect Cys406–Cys435, Cys417–Cys430, Cys419–Cys425, Cys429–Cys452, Cys443–Cys449, Cys448–Cys474, Cys461–Cys481, Cys468–Cys499, Cys492–Cys504, Cys511–Cys561, Cys526–Cys572, Cys539–Cys549, Cys556–Cys598, and Cys592–Cys603. The short motif at 467–469 (ECD) is the D/ECD-tripeptide element. The Ca(2+) site is built by Asp469, Met470, Asp472, Asp483, and Arg484.

It belongs to the venom metalloproteinase (M12B) family. P-III subfamily. P-IIIc sub-subfamily. As to quaternary structure, homodimer; disulfide-linked. Requires Zn(2+) as cofactor. Post-translationally, the N-terminus is blocked. Expressed by the venom gland.

It localises to the secreted. Inhibited by EDTA and EGTA, but not by PMSF. In terms of biological role, zinc metalloprotease that has fibrinogenolytic and hemorrhagic activities. It induces apoptosis in vascular endothelial cells (VEC), without degrading extracellular matrix (it cannot cleave collagen) or inhibiting adhesion of VEC. VAP1-induced apoptosis is inhibited by antibodies for integrin alpha-3, alpha-6, beta-1 and CD9. Apoptosis is accompanied by severe cell fragmentation, which is controlled by caspases. The chain is Zinc metalloproteinase-disintegrin-like VAP1 from Crotalus atrox (Western diamondback rattlesnake).